Consider the following 156-residue polypeptide: Small ribosomal subunit protein uS7 (156 aa).

This sequence belongs to the universal ribosomal protein uS7 family. As to quaternary structure, part of the 30S ribosomal subunit. Contacts proteins S9 and S11.

Its function is as follows. One of the primary rRNA binding proteins, it binds directly to 16S rRNA where it nucleates assembly of the head domain of the 30S subunit. Is located at the subunit interface close to the decoding center, probably blocks exit of the E-site tRNA. The polypeptide is Small ribosomal subunit protein uS7 (Methylobacterium nodulans (strain LMG 21967 / CNCM I-2342 / ORS 2060)).